The following is a 247-amino-acid chain: GTP cyclohydrolase 1 type 2 homolog (247 aa).

H63, H64, D101, H215, and E219 together coordinate a divalent metal cation.

Belongs to the GTP cyclohydrolase I type 2/NIF3 family. As to quaternary structure, homohexamer.

The chain is GTP cyclohydrolase 1 type 2 homolog from Yersinia pestis.